Reading from the N-terminus, the 301-residue chain is E3 ubiquitin-protein ligase DIS1 (301 aa).

An RING-type; degenerate zinc finger spans residues 53-89 (CPVCLSAMYPPIHQCSNGHTLCSGCKPRVHNRCPTCR). The segment at 106-166 (SLELPCKYQN…LVNHLKDDHK (61 aa)) adopts an SIAH-type; degenerate zinc-finger fold.

This sequence belongs to the SINA (Seven in absentia) family. As to quaternary structure, homodimer. Interacts with NEK6. Interacts with SKIPA.

The protein resides in the nucleus. The protein localises to the cytoplasm. The catalysed reaction is S-ubiquitinyl-[E2 ubiquitin-conjugating enzyme]-L-cysteine + [acceptor protein]-L-lysine = [E2 ubiquitin-conjugating enzyme]-L-cysteine + N(6)-ubiquitinyl-[acceptor protein]-L-lysine.. Its pathway is protein modification; protein ubiquitination. Its function is as follows. E3 ubiquitin-protein ligase that mediates ubiquitination and subsequent proteasomal degradation of target proteins. E3 ubiquitin ligases accept ubiquitin from an E2 ubiquitin-conjugating enzyme in the form of a thioester and then directly transfers the ubiquitin to targeted substrates. Plays a negative role in drought stress tolerance through transcriptional and post-translational regulation of diverse stress-related genes. Interacts with the serine/threonine-protein kinase NEK6 and promotes its degradation via the 26S proteasome-dependent pathway. The sequence is that of E3 ubiquitin-protein ligase DIS1 from Oryza sativa subsp. japonica (Rice).